A 426-amino-acid chain; its full sequence is Protein arginine methyltransferase NDUFAF7 homolog, mitochondrial (426 aa).

It belongs to the NDUFAF7 family.

The protein resides in the mitochondrion. The catalysed reaction is L-arginyl-[protein] + 2 S-adenosyl-L-methionine = N(omega),N(omega)'-dimethyl-L-arginyl-[protein] + 2 S-adenosyl-L-homocysteine + 2 H(+). Functionally, arginine methyltransferase involved in the assembly or stability of mitochondrial NADH:ubiquinone oxidoreductase complex (complex I). This is Protein arginine methyltransferase NDUFAF7 homolog, mitochondrial from Caenorhabditis elegans.